The sequence spans 129 residues: MTTVEQIIDQLKTLTLIESSELVKQIEETFGVDASAPVGGAIMMAPGQESAGQEVVEEKTTFDVIVKDIASDKRVSVLKVIRKLTSLGLAEAKEFTVSLPKALKEGISKEEAAEAKKDLELAGAVVDIV.

This sequence belongs to the bacterial ribosomal protein bL12 family. In terms of assembly, homodimer. Part of the ribosomal stalk of the 50S ribosomal subunit. Forms a multimeric L10(L12)X complex, where L10 forms an elongated spine to which 2 to 4 L12 dimers bind in a sequential fashion. Binds GTP-bound translation factors.

The protein localises to the plastid. Its subcellular location is the chloroplast. Forms part of the ribosomal stalk which helps the ribosome interact with GTP-bound translation factors. Is thus essential for accurate translation. This Tupiella akineta (Green alga) protein is Large ribosomal subunit protein bL12c.